The primary structure comprises 721 residues: Centlein (721 aa).

Residues 52–164 are a coiled coil; the sequence is KNEKAISEQT…LRDENEEVVN (113 aa). 2 disordered regions span residues 156–180 and 259–288; these read RDEN…KSEM and ETSQ…QQEV. Basic and acidic residues-rich tracts occupy residues 165–178 and 267–284; these read PEEK…KAKS and IEND…DSRA. Coiled coils occupy residues 345 to 515 and 573 to 626; these read LLRE…EDLK and QSEQ…TQKS. Thr658 carries the phosphothreonine modification.

As to quaternary structure, interacts with CEP250 and CEP68. Interacts with NEK2; the interaction leads to phosphorylation of CNTLN. Phosphorylated directly or indirectly by NEK2.

Its subcellular location is the cytoplasm. It is found in the cytoskeleton. The protein resides in the microtubule organizing center. It localises to the centrosome. The protein localises to the centriole. Functionally, required for centrosome cohesion and recruitment of CEP68 to centrosomes. The polypeptide is Centlein (Rattus norvegicus (Rat)).